Reading from the N-terminus, the 418-residue chain is Serine/threonine transporter SstT (418 aa).

Transmembrane regions (helical) follow at residues 21-41, 49-69, 83-103, 142-162, 190-210, 217-237, 299-319, and 331-351; these read ILIGLVAGIVLALVSTPAAIA, FVGALKAVAPVLVLMLVIASI, ILFLYVLGTFSAALVAVVVSF, ALLNANYIGILAWAVGLGIAL, FAPLGIFGLVASTIAATGFGA, LLVVLIGCMLLVALVVNPLIV, MAGAAITITVLTLAAVHTLGI, and VVAAICACGASGVAGGSLLLI.

The protein belongs to the dicarboxylate/amino acid:cation symporter (DAACS) (TC 2.A.23) family.

The protein localises to the cell inner membrane. It carries out the reaction L-serine(in) + Na(+)(in) = L-serine(out) + Na(+)(out). The catalysed reaction is L-threonine(in) + Na(+)(in) = L-threonine(out) + Na(+)(out). Functionally, involved in the import of serine and threonine into the cell, with the concomitant import of sodium (symport system). The chain is Serine/threonine transporter SstT from Yersinia pestis bv. Antiqua (strain Antiqua).